Reading from the N-terminus, the 320-residue chain is Acetyl-coenzyme A carboxylase carboxyl transferase subunit alpha (320 aa).

In terms of domain architecture, CoA carboxyltransferase C-terminal spans 41–295; that stretch reads SIEEKAAQAL…GDAIAGALND (255 aa).

The protein belongs to the AccA family. In terms of assembly, acetyl-CoA carboxylase is a heterohexamer composed of biotin carboxyl carrier protein (AccB), biotin carboxylase (AccC) and two subunits each of ACCase subunit alpha (AccA) and ACCase subunit beta (AccD).

It is found in the cytoplasm. The catalysed reaction is N(6)-carboxybiotinyl-L-lysyl-[protein] + acetyl-CoA = N(6)-biotinyl-L-lysyl-[protein] + malonyl-CoA. The protein operates within lipid metabolism; malonyl-CoA biosynthesis; malonyl-CoA from acetyl-CoA: step 1/1. Component of the acetyl coenzyme A carboxylase (ACC) complex. First, biotin carboxylase catalyzes the carboxylation of biotin on its carrier protein (BCCP) and then the CO(2) group is transferred by the carboxyltransferase to acetyl-CoA to form malonyl-CoA. This Nitrobacter winogradskyi (strain ATCC 25391 / DSM 10237 / CIP 104748 / NCIMB 11846 / Nb-255) protein is Acetyl-coenzyme A carboxylase carboxyl transferase subunit alpha.